We begin with the raw amino-acid sequence, 763 residues long: Photosystem I P700 chlorophyll a apoprotein A1 (763 aa).

8 helical membrane-spanning segments follow: residues 72–95, 158–181, 197–221, 305–323, 360–383, 399–425, 447–469, and 544–562; these read IFSA…FHGA, LYVT…FHYH, LNHH…HVSL, TAHH…GHMY, WHAQ…HHMY, LSLF…IFMV, AIIS…LYIH, and FMVH…LILL. The [4Fe-4S] cluster site is built by cysteine 586 and cysteine 595. 2 helical membrane-spanning segments follow: residues 602–623 and 677–699; these read HVFL…HYSW and TSAY…MFLF. Residue histidine 688 participates in chlorophyll a' binding. Chlorophyll a is bound by residues methionine 696 and tyrosine 704. Tryptophan 705 contributes to the phylloquinone binding site. The helical transmembrane segment at 737–757 threads the bilayer; the sequence is AVGVAHYLLGGIVTTWSFFLA.

Belongs to the PsaA/PsaB family. In terms of assembly, the PsaA/B heterodimer binds the P700 chlorophyll special pair and subsequent electron acceptors. PSI consists of a core antenna complex that captures photons, and an electron transfer chain that converts photonic excitation into a charge separation. The cyanobacterial PSI reaction center is composed of one copy each of PsaA,B,C,D,E,F,I,J,K,L,M and X, and forms trimeric complexes. PSI electron transfer chain: 5 chlorophyll a, 1 chlorophyll a', 2 phylloquinones and 3 4Fe-4S clusters. PSI core antenna: 90 chlorophyll a, 22 carotenoids, 3 phospholipids and 1 galactolipid. P700 is a chlorophyll a/chlorophyll a' dimer, A0 is one or more chlorophyll a, A1 is one or both phylloquinones and FX is a shared 4Fe-4S iron-sulfur center. is required as a cofactor.

It is found in the cellular thylakoid membrane. The enzyme catalyses reduced [plastocyanin] + hnu + oxidized [2Fe-2S]-[ferredoxin] = oxidized [plastocyanin] + reduced [2Fe-2S]-[ferredoxin]. Functionally, psaA and PsaB bind P700, the primary electron donor of photosystem I (PSI), as well as the electron acceptors A0, A1 and FX. PSI is a plastocyanin/cytochrome c6-ferredoxin oxidoreductase, converting photonic excitation into a charge separation, which transfers an electron from the donor P700 chlorophyll pair to the spectroscopically characterized acceptors A0, A1, FX, FA and FB in turn. Oxidized P700 is reduced on the lumenal side of the thylakoid membrane by plastocyanin or cytochrome c6. This is Photosystem I P700 chlorophyll a apoprotein A1 from Synechococcus elongatus (strain ATCC 33912 / PCC 7942 / FACHB-805) (Anacystis nidulans R2).